A 337-amino-acid chain; its full sequence is Protein ABHD13 (337 aa).

A helical; Signal-anchor for type II membrane protein membrane pass occupies residues 37–57 (FHLYGGIILLLLIFISIAGIL). Residues Ser193, Asp268, and His298 each act as charge relay system in the active site. A glycan (N-linked (GlcNAc...) asparagine) is linked at Asn299.

It belongs to the serine esterase family.

The protein resides in the membrane. The polypeptide is Protein ABHD13 (Homo sapiens (Human)).